The sequence spans 64 residues: Photosystem II reaction center protein J (64 aa).

Residues 35–55 (LWLVATAGGIAVIFVLGIFFY) traverse the membrane as a helical segment.

Belongs to the PsbJ family. PSII is composed of 1 copy each of membrane proteins PsbA, PsbB, PsbC, PsbD, PsbE, PsbF, PsbH, PsbI, PsbJ, PsbK, PsbL, PsbM, PsbT, PsbX, PsbY, Psb30/Ycf12, peripheral proteins PsbO, CyanoQ (PsbQ), PsbU, PsbV and a large number of cofactors. It forms dimeric complexes.

It localises to the cellular thylakoid membrane. One of the components of the core complex of photosystem II (PSII). PSII is a light-driven water:plastoquinone oxidoreductase that uses light energy to abstract electrons from H(2)O, generating O(2) and a proton gradient subsequently used for ATP formation. It consists of a core antenna complex that captures photons, and an electron transfer chain that converts photonic excitation into a charge separation. The polypeptide is Photosystem II reaction center protein J (Prochlorococcus marinus (strain MIT 9515)).